We begin with the raw amino-acid sequence, 207 residues long: Ribosomal RNA small subunit methyltransferase G (207 aa).

S-adenosyl-L-methionine contacts are provided by residues glycine 74, leucine 79, 125 to 126, and arginine 140; that span reads VE.

This sequence belongs to the methyltransferase superfamily. RNA methyltransferase RsmG family.

The protein resides in the cytoplasm. It carries out the reaction guanosine(527) in 16S rRNA + S-adenosyl-L-methionine = N(7)-methylguanosine(527) in 16S rRNA + S-adenosyl-L-homocysteine. Its function is as follows. Specifically methylates the N7 position of guanine in position 527 of 16S rRNA. The polypeptide is Ribosomal RNA small subunit methyltransferase G (Shewanella pealeana (strain ATCC 700345 / ANG-SQ1)).